Consider the following 162-residue polypeptide: Nucleotide-binding protein ABSDF0503 (162 aa).

It belongs to the YajQ family.

In terms of biological role, nucleotide-binding protein. This is Nucleotide-binding protein ABSDF0503 from Acinetobacter baumannii (strain SDF).